Reading from the N-terminus, the 216-residue chain is Adenylate kinase (216 aa).

Residue 11-16 (GSGKGT) coordinates ATP. The NMP stretch occupies residues 31 to 60 (ATGDLFRKAIERGDELGDTVKSYMERGELV). AMP is bound by residues T32, R37, 58–60 (ELV), 86–89 (GFPR), and Q93. The tract at residues 127–163 (GRWVCRSCQSPYQCGCAEVAEGKCSRCQGELYQRPDD) is LID. ATP is bound at residue R128. Zn(2+)-binding residues include C131, C134, C150, and C153. Residues R160 and R171 each contribute to the AMP site. A199 contributes to the ATP binding site.

Belongs to the adenylate kinase family. In terms of assembly, monomer.

Its subcellular location is the cytoplasm. The enzyme catalyses AMP + ATP = 2 ADP. The protein operates within purine metabolism; AMP biosynthesis via salvage pathway; AMP from ADP: step 1/1. In terms of biological role, catalyzes the reversible transfer of the terminal phosphate group between ATP and AMP. Plays an important role in cellular energy homeostasis and in adenine nucleotide metabolism. This Dehalococcoides mccartyi (strain ATCC BAA-2266 / KCTC 15142 / 195) (Dehalococcoides ethenogenes (strain 195)) protein is Adenylate kinase.